We begin with the raw amino-acid sequence, 491 residues long: Probable G-protein coupled receptor Mth-like 7 (491 aa).

The first 22 residues, 1–22 (MRLPWVIFCTVLLLIFTNNSNA), serve as a signal peptide directing secretion. Residues Asn18 and Asn42 are each glycosylated (N-linked (GlcNAc...) asparagine). Topologically, residues 23–167 (DIPGCNYYDT…EEVSIQIFNK (145 aa)) are extracellular. Cystine bridges form between Cys27/Cys80, Cys82/Cys87, and Cys92/Cys103. Residues 168 to 188 (CGLIVWFQDGKFWVTVDLFME) traverse the membrane as a helical segment. Residues 189 to 222 (KQDYCLYRHNFDSDFPKSMWIIRHRCTSHISPGS) lie on the Cytoplasmic side of the membrane. The helical transmembrane segment at 223–243 (LEILIITMICFVLTIAVYLYI) threads the bilayer. Residues 244-252 (KKLRNVTGK) lie on the Extracellular side of the membrane. Asn248 is a glycosylation site (N-linked (GlcNAc...) asparagine). Residues 253 to 273 (CIVCCIVSRFIQCLIMILDHL) form a helical membrane-spanning segment. Topologically, residues 274 to 325 (NLLNGICSPAGYSSHFFRMASNLWLSVISYHTWKVLTSLNRVDPNYRFLRYN) are cytoplasmic. A helical membrane pass occupies residues 326–346 (AFVWSTAAIMTGSIYIVNQIW). The Extracellular segment spans residues 347-372 (ENDPSKWNWLPLVGFIRCSVKDWHPS). Residues 373–393 (VWIYISGPSLALSTFNVAMFA) form a helical membrane-spanning segment. Residues 394 to 434 (LTAIYIRKVKGGINKFTNEEEGRINCINFDSQTYLQFLRLS) lie on the Cytoplasmic side of the membrane. A helical membrane pass occupies residues 435–455 (IVMGLTWIFNVIPYSARLHIF). Residues 456–458 (WEW) lie on the Extracellular side of the membrane. Residues 459-479 (VGIISEYFHSAFGIVLFVLLV) traverse the membrane as a helical segment. The Cytoplasmic segment spans residues 480 to 491 (LKRSTWTLMMDS).

Belongs to the G-protein coupled receptor 2 family. Mth subfamily.

The protein localises to the cell membrane. This is Probable G-protein coupled receptor Mth-like 7 (mthl7) from Drosophila melanogaster (Fruit fly).